A 707-amino-acid chain; its full sequence is Protein SGM1 (707 aa).

Over residues 1 to 11 (MSKKLSLEERL) the composition is skewed to basic and acidic residues. The disordered stretch occupies residues 1-52 (MSKKLSLEERLSLATKKGRKKNKRSTSNLSSPSPVVLSNNEQESARTSIDDA). Ser-2 carries the N-acetylserine modification. Residues 27–40 (SNLSSPSPVVLSNN) are compositionally biased toward low complexity. The stretch at 122 to 473 (VEELVKEISP…KPHQENSNEK (352 aa)) forms a coiled coil. A phosphoserine mark is found at Ser-151, Ser-538, Ser-549, Ser-568, Ser-571, Ser-576, and Ser-589. Positions 594–706 (SAHLVNKLST…QQMVEMQGKM (113 aa)) form a coiled coil.

It belongs to the SGM1 family. In terms of assembly, interacts with YPT6.

It is found in the golgi apparatus. In terms of biological role, required for normal growth rate on galactose and mannose. The sequence is that of Protein SGM1 (SGM1) from Saccharomyces cerevisiae (strain ATCC 204508 / S288c) (Baker's yeast).